Consider the following 557-residue polypeptide: Glypican-4 (557 aa).

The N-terminal stretch at 1-18 is a signal peptide; it reads MARLGLLALLCTLAALSA. Residue S357 is modified to Phosphoserine. O-linked (Xyl...) (glycosaminoglycan) serine glycans are attached at residues S494, S498, and S500. The N-linked (GlcNAc...) asparagine glycan is linked to N514. The GPI-anchor amidated serine moiety is linked to residue S529. Positions 530 to 557 are cleaved as a propeptide — removed in mature form; that stretch reads AGGAHAEAKPYLLAALCILFLAVQGEWR.

Belongs to the glypican family. In terms of tissue distribution, highly expressed in developing brain and kidney.

It is found in the cell membrane. The protein resides in the secreted. Its subcellular location is the extracellular space. In terms of biological role, cell surface proteoglycan that bears heparan sulfate. May be involved in the development of kidney tubules and of the central nervous system. The chain is Glypican-4 (Gpc4) from Mus musculus (Mouse).